Reading from the N-terminus, the 547-residue chain is uncharacterized protein (547 aa).

To B.pertussis prn N-terminal region.

This is an uncharacterized protein from Escherichia coli O157:H7.